The following is a 146-amino-acid chain: Large ribosomal subunit protein uL15 (146 aa).

Residues 1–13 show a composition bias toward basic and acidic residues; it reads MKLHELKPAEGSR. A disordered region spans residues 1–48; sequence MKLHELKPAEGSRKVRNRVGRGIGSGNGKTAGKGHKGQNARSGGGVRL. The span at 21–31 shows a compositional bias: gly residues; sequence RGIGSGNGKTA.

It belongs to the universal ribosomal protein uL15 family. As to quaternary structure, part of the 50S ribosomal subunit.

In terms of biological role, binds to the 23S rRNA. The sequence is that of Large ribosomal subunit protein uL15 from Bacillus cytotoxicus (strain DSM 22905 / CIP 110041 / 391-98 / NVH 391-98).